A 488-amino-acid chain; its full sequence is Tocopherol cyclase, chloroplastic (488 aa).

The N-terminal 76 residues, 1 to 76 (MEIRSLIVSM…VPTSPNRELR (76 aa)), are a transit peptide targeting the chloroplast.

Its subcellular location is the plastid. The protein resides in the chloroplast. The protein localises to the plastoglobule. It carries out the reaction delta-tocopherol = 2-methyl-6-phytyl-1,4-benzene-1,4-diol. The enzyme catalyses gamma-tocopherol = 2,3-dimethyl-6-phytylbenzene-1,4-diol. It catalyses the reaction delta-tocotrienol = 6-geranylgeranyl-2-methylbenzene-1,4-diol. The catalysed reaction is gamma-tocotrienol = 6-geranylgeranyl-2,3-dimethylbenzene-1,4-diol. Its pathway is cofactor biosynthesis; tocopherol biosynthesis. Its function is as follows. Involved in the synthesis of both tocopherols and tocotrienols (vitamin E), which presumably protect photosynthetic complexes from oxidative stress. Catalyzes the conversion of 2-methyl-6-phytyl-1,4-hydroquinone and 2,3-dimethyl-5-phytyl-1,4-hydroquinone (DMPQ) to delta- and gamma-tocopherol respectively. Also converts 2,3-dimethyl-5-geranylgeranyl-1,4-hydroquinone (DMGQ) to gamma-tocotrienol. This Arabidopsis thaliana (Mouse-ear cress) protein is Tocopherol cyclase, chloroplastic (VTE1).